An 812-amino-acid polypeptide reads, in one-letter code: Outer membrane usher protein FaeD (812 aa).

A signal peptide spans 1–35 (MKKYVTTKSVQPVAFRLTTLSLVMSAVLGSASVIA). Cys-793 and Cys-811 are joined by a disulfide.

Belongs to the fimbrial export usher family.

The protein resides in the cell outer membrane. Involved in the export and assembly of K88ab fimbrial subunits across the outer membrane. This is Outer membrane usher protein FaeD (faeD) from Escherichia coli.